The primary structure comprises 428 residues: MIVDSVSQKPTTLVQKTINIYLCGPTVYNDLHLGNTRPLIVFDVLNRVLKKAKYTVNFVQNITDIDDKIIKIAQQQEVSESVVTKQQITAYKSLLKKLNILPIKHIQITEKIDKIPDYIDQLVNQNHAYVSTQNNVYFAVNSLKQYGYLANRMVHLEETDTDKKNKLDFVLWKITTAGIKWNSKWGLGRPGWHVECAFLIDYCFKNELTIHGGGVDLKFPHHENENALHMALYNQPITKHWMHIGHLMIENQKMSKSLQNFLLAVDFLNFHDFRVLRWIFYQKHYLHPIDLNQSLIEKANNDIQRIAKTLNVARTWLVYSEQSELISPKQYDPVFSALLDNLNFANAVAAIWKLIKKINTSIKTKDFSVLREQLSFLEWSIDLLGISFKSIHTKLNVRLIKEWSILHKQKAMDKADQIRKKLIKKMLL.

Position 23 (cysteine 23) interacts with Zn(2+). Residues 25-35 (PTVYNDLHLGN) carry the 'HIGH' region motif. 3 residues coordinate Zn(2+): cysteine 196, histidine 221, and glutamate 225. The 'KMSKS' region signature appears at 253–257 (KMSKS). Position 256 (lysine 256) interacts with ATP.

This sequence belongs to the class-I aminoacyl-tRNA synthetase family. In terms of assembly, monomer. It depends on Zn(2+) as a cofactor.

It localises to the cytoplasm. It catalyses the reaction tRNA(Cys) + L-cysteine + ATP = L-cysteinyl-tRNA(Cys) + AMP + diphosphate. The protein is Cysteine--tRNA ligase (cysS) of Mycoplasma genitalium (strain ATCC 33530 / DSM 19775 / NCTC 10195 / G37) (Mycoplasmoides genitalium).